The primary structure comprises 1028 residues: Contactin-6 (1028 aa).

The first 19 residues, 1 to 19 (MRLLWKLVILLPLINSSAG), serve as a signal peptide directing secretion. 6 consecutive Ig-like C2-type domains span residues 26–117 (PIFT…AKLQ), 122–208 (EDFE…RSVQ), 227–308 (PKIE…RNLA), 318–402 (PEWE…AELR), 408–495 (PDFS…GSLI), and 499–587 (RTVI…ESLS). 6 disulfide bridges follow: C50–C100, C144–C196, C249–C297, C339–C386, C431–C479, and C521–C577. N65 and N193 each carry an N-linked (GlcNAc...) asparagine glycan. N-linked (GlcNAc...) asparagine glycosylation is found at N368, N377, and N468. Fibronectin type-III domains are found at residues 600 to 698 (PPED…TKAS), 703 to 800 (APVN…SGED), 805 to 901 (APRG…TKKS), and 902 to 996 (PPSQ…KMSS). N-linked (GlcNAc...) asparagine glycosylation is found at N659, N765, N860, and N865. The residue at position 882 (Y882) is a Phosphotyrosine. The span at 887–902 (TGPSSPPVNVTTKKSP) shows a compositional bias: polar residues. The segment at 887–908 (TGPSSPPVNVTTKKSPPSQPPA) is disordered. 4 N-linked (GlcNAc...) asparagine glycosylation sites follow: N895, N931, N956, and N957. Residue S999 is the site of GPI-anchor amidated serine attachment. The propeptide at 1000-1028 (RGIQFLEPSTHFLSIVIVIFHCFAIQPLI) is removed in mature form.

The protein belongs to the immunoglobulin superfamily. Contactin family. As to quaternary structure, interacts with PTPRG. As to expression, expressed in nervous system. Highly expressed in cerebellum. Expressed at intermediate level in thalamus, subthalamic nucleus. Weakly expressed in corpus callosum, caudate nucleus and spinal cord.

It is found in the cell membrane. Contactins mediate cell surface interactions during nervous system development. Participates in oligodendrocytes generation by acting as a ligand of NOTCH1. Its association with NOTCH1 promotes NOTCH1 activation through the released notch intracellular domain (NICD) and subsequent translocation to the nucleus. Involved in motor coordination. This is Contactin-6 (CNTN6) from Homo sapiens (Human).